A 375-amino-acid chain; its full sequence is Tryptophan dimethylallyltransferase (375 aa).

Residues 83 to 84 (IL) and Glu92 each bind L-tryptophan. The substrate site is built by Arg103, Lys189, and Tyr191. Residues Tyr193 and Arg246 each coordinate L-tryptophan. Substrate is bound by residues Arg259, Lys261, Tyr263, Gln345, and Tyr347.

Belongs to the tryptophan dimethylallyltransferase family. As to quaternary structure, homodimer.

It carries out the reaction L-tryptophan + dimethylallyl diphosphate = 4-(3-methylbut-2-enyl)-L-tryptophan + diphosphate. The protein operates within alkaloid biosynthesis; ergot alkaloid biosynthesis. Tryptophan dimethylallyltransferase; part of the gene cluster that mediates the biosynthesis of fungal ergot alkaloid. DmaW catalyzes the first step of ergot alkaloid biosynthesis by condensing dimethylallyl diphosphate (DMAP) and tryptophan to form 4-dimethylallyl-L-tryptophan. The second step is catalyzed by the methyltransferase easF that methylates 4-dimethylallyl-L-tryptophan in the presence of S-adenosyl-L-methionine, resulting in the formation of 4-dimethylallyl-L-abrine. The catalase easC and the FAD-dependent oxidoreductase easE then transform 4-dimethylallyl-L-abrine to chanoclavine-I which is further oxidized by easD in the presence of NAD(+), resulting in the formation of chanoclavine-I aldehyde. Chanoclavine-I aldehyde is the precursor of ergoamides and ergopeptines in Clavicipitaceae, and clavine-type alcaloids such as fumiclavine in Trichocomaceae. However, the metabolites downstream of chanoclavine-I aldehyde in Arthrodermataceae have not been identified yet. The sequence is that of Tryptophan dimethylallyltransferase from Trichophyton verrucosum (strain HKI 0517).